The chain runs to 376 residues: Succinyl-diaminopimelate desuccinylase (376 aa).

Position 66 (His66) interacts with Zn(2+). Asp68 is a catalytic residue. Residue Asp99 participates in Zn(2+) binding. Catalysis depends on Glu133, which acts as the Proton acceptor. The Zn(2+) site is built by Glu134, Glu162, and His348.

Belongs to the peptidase M20A family. DapE subfamily. As to quaternary structure, homodimer. The cofactor is Zn(2+). It depends on Co(2+) as a cofactor.

The catalysed reaction is N-succinyl-(2S,6S)-2,6-diaminopimelate + H2O = (2S,6S)-2,6-diaminopimelate + succinate. Its pathway is amino-acid biosynthesis; L-lysine biosynthesis via DAP pathway; LL-2,6-diaminopimelate from (S)-tetrahydrodipicolinate (succinylase route): step 3/3. Its function is as follows. Catalyzes the hydrolysis of N-succinyl-L,L-diaminopimelic acid (SDAP), forming succinate and LL-2,6-diaminopimelate (DAP), an intermediate involved in the bacterial biosynthesis of lysine and meso-diaminopimelic acid, an essential component of bacterial cell walls. This Xanthomonas oryzae pv. oryzae (strain PXO99A) protein is Succinyl-diaminopimelate desuccinylase.